A 306-amino-acid chain; its full sequence is UDP-N-acetylenolpyruvoylglucosamine reductase (306 aa).

The FAD-binding PCMH-type domain maps to 34–198 (VGGPADLLIT…LEVTFKLHNS (165 aa)). R177 is an active-site residue. Residue S227 is the Proton donor of the active site. E297 is an active-site residue.

The protein belongs to the MurB family. It depends on FAD as a cofactor.

It localises to the cytoplasm. The catalysed reaction is UDP-N-acetyl-alpha-D-muramate + NADP(+) = UDP-N-acetyl-3-O-(1-carboxyvinyl)-alpha-D-glucosamine + NADPH + H(+). Its pathway is cell wall biogenesis; peptidoglycan biosynthesis. Cell wall formation. The sequence is that of UDP-N-acetylenolpyruvoylglucosamine reductase from Clostridium botulinum (strain Langeland / NCTC 10281 / Type F).